The sequence spans 254 residues: MPKSSPLRLGVNIDHIATVRNARGGRHPDPVRAALTAIEAGADGITAHLREDRRHIRDNDMERLKAEISKPLNFEMAATPDMVRIALGVKPHAVCLVPERREELTTEGGLDVVGQRDSLAPSIARFNDAGIRVSLFIAADPAQIEMAAKLKAPAIELHTGAWCDAITDDEPAKVAEEWRRIVAGAALAQSAGLEVHAGHGLDYATAETIAALPQIVELNIGFYMIGEALFVGLGETVKAMRSAMDRGRARVIAA.

Position 12 (Asn12) interacts with 3-amino-2-oxopropyl phosphate. 1-deoxy-D-xylulose 5-phosphate is bound at residue Asp14–His15. Arg23 lines the 3-amino-2-oxopropyl phosphate pocket. The active-site Proton acceptor is the His48. Positions 50 and 55 each coordinate 1-deoxy-D-xylulose 5-phosphate. The active-site Proton acceptor is the Glu75. Thr105 serves as a coordination point for 1-deoxy-D-xylulose 5-phosphate. The active-site Proton donor is His199. 3-amino-2-oxopropyl phosphate-binding positions include Gly200 and Gly221–Phe222.

Belongs to the PNP synthase family. As to quaternary structure, homooctamer; tetramer of dimers.

The protein localises to the cytoplasm. It catalyses the reaction 3-amino-2-oxopropyl phosphate + 1-deoxy-D-xylulose 5-phosphate = pyridoxine 5'-phosphate + phosphate + 2 H2O + H(+). It functions in the pathway cofactor biosynthesis; pyridoxine 5'-phosphate biosynthesis; pyridoxine 5'-phosphate from D-erythrose 4-phosphate: step 5/5. Functionally, catalyzes the complicated ring closure reaction between the two acyclic compounds 1-deoxy-D-xylulose-5-phosphate (DXP) and 3-amino-2-oxopropyl phosphate (1-amino-acetone-3-phosphate or AAP) to form pyridoxine 5'-phosphate (PNP) and inorganic phosphate. The chain is Pyridoxine 5'-phosphate synthase from Rhodopseudomonas palustris (strain HaA2).